The chain runs to 1437 residues: Protein CC2D2B (1437 aa).

This chain is Protein CC2D2B, found in Homo sapiens (Human).